We begin with the raw amino-acid sequence, 246 residues long: UPF0246 protein str1967 (246 aa).

It belongs to the UPF0246 family.

The protein is UPF0246 protein str1967 of Streptococcus thermophilus (strain CNRZ 1066).